We begin with the raw amino-acid sequence, 1007 residues long: Beta-galactosidase A (1007 aa).

The N-terminal stretch at 1-18 (MKLSSACAIALLAAQAAG) is a signal peptide. Substrate is bound by residues Y96 and 140–142 (NAE). The N-linked (GlcNAc...) asparagine glycan is linked to N156. N199 contributes to the substrate binding site. E200 serves as the catalytic Proton donor. 2 disulfides stabilise this stretch: C205-C206 and C266-C315. The active-site Nucleophile is the E298. Position 364 (Y364) interacts with substrate. N402, N422, N478, N522, N622, N739, N760, N777, N805, and N914 each carry an N-linked (GlcNAc...) asparagine glycan.

The protein belongs to the glycosyl hydrolase 35 family.

It localises to the secreted. The catalysed reaction is Hydrolysis of terminal non-reducing beta-D-galactose residues in beta-D-galactosides.. Its function is as follows. Cleaves beta-linked terminal galactosyl residues from gangliosides, glycoproteins, and glycosaminoglycans. The chain is Beta-galactosidase A (lacA) from Aspergillus niger (strain ATCC MYA-4892 / CBS 513.88 / FGSC A1513).